A 324-amino-acid polypeptide reads, in one-letter code: MPKPSIRGSELPQRQSPRLRTSLLSTSSDPHHLSRPITDRSPKLGLDRRSPRSGGPHTDPLSQKKLGSRISGLESQLGQAQEELRLLKQQLAKAEAAKKRAQEELHRKKSKKPNTPAPERDDIPGDGHQETDVFEVLDEKAKESEKTKNDELASKEDQINVLKARLYDLEKERVSLSEENETLKDQLKKTDTEMSCAKAKEDEIASKVSQIGEELEESNETTAKLKKKLESVEEAKETLEAEMKKLKVQTEQWRKAADAAAAVLSGGVEMNGRFSEQCGSMEKHFAGRFVGSPGMADDSDDGSGKRKSSGKKMFGDLWKKKGQK.

Disordered stretches follow at residues M1–E74, L91–E156, S175–E201, and F289–K324. Over residues Q13–S28 the composition is skewed to low complexity. Basic and acidic residues-rich tracts occupy residues D29–S50, E95–H106, and P118–E156. Residues S62–G266 are a coiled coil. Basic and acidic residues predominate over residues M313–K324.

The protein belongs to the ICR family. In terms of assembly, interacts with ARAC11 in vitro.

Functionally, acts as a scaffold, mediating interaction of ROPs with different proteins. In Arabidopsis thaliana (Mouse-ear cress), this protein is Interactor of constitutive active ROPs 4 (ICR4).